Reading from the N-terminus, the 489-residue chain is Cytochrome P450 2C70 (489 aa).

An N-terminal signal peptide occupies residues 1–27 (MALFIFLGIWLSCFLFLFLWNQHRGRG). C434 serves as a coordination point for heme.

This sequence belongs to the cytochrome P450 family. Heme serves as cofactor. In terms of tissue distribution, expressed in liver.

The protein resides in the endoplasmic reticulum membrane. The protein localises to the microsome membrane. The catalysed reaction is chenodeoxycholate + reduced [NADPH--hemoprotein reductase] + O2 = alpha-muricholate + oxidized [NADPH--hemoprotein reductase] + H2O + H(+). It catalyses the reaction ursodeoxycholate + reduced [NADPH--hemoprotein reductase] + O2 = beta-muricholate + oxidized [NADPH--hemoprotein reductase] + H2O + H(+). Its function is as follows. A cytochrome P450 monooxygenase involved in muricholic acid (MCA) synthesis. Hydroxylates at the 6-beta position two major bile acids, chenodeoxycholic acid (CDCA) and ursodeoxycholic acid (UDCA) to form alpha-MCA and beta-MCA, respectively. May regulate NR1H4/farnesoid X receptor signaling, as taurine-conjugated MCAs are antagonists of NR1H4. Mechanistically, uses molecular oxygen inserting one oxygen atom into a substrate, and reducing the second into a water molecule, with two electrons provided by NADPH via cytochrome P450 reductase (CPR; NADPH-ferrihemoprotein reductase). The protein is Cytochrome P450 2C70 of Mus musculus (Mouse).